A 607-amino-acid chain; its full sequence is Glycerophosphodiester phosphodiesterase domain-containing protein 5 (607 aa).

Over 1–42 (MVRHQPLQYYEPQLCLSCLTGIYGCRWKRYQRSHDDTTPWER) the chain is Cytoplasmic. 2 cysteine pairs are disulfide-bonded: Cys15–Cys18 and Cys25–Cys571. A helical membrane pass occupies residues 43-63 (LWFLLLVCTFSLTLTWLYFWW). The Extracellular portion of the chain corresponds to 64 to 89 (GVHNDYDEFNWYLYNRMGYWSDWSVP). A helical membrane pass occupies residues 90–110 (ILVTSAAAFTYIAGLLVLALC). The Cytoplasmic portion of the chain corresponds to 111 to 125 (HIAVGQQLNLHWIHK). The helical transmembrane segment at 126–146 (MGLVVILASTVVAMSAVAQLW) threads the bilayer. Topologically, residues 147 to 160 (EDEWEVLLISLQGT) are extracellular. A helical membrane pass occupies residues 161–181 (APFLHIGALVAITALSWIVAG). The Cytoplasmic portion of the chain corresponds to 182-192 (QFARAERSSSQ). A helical membrane pass occupies residues 193 to 213 (LTILCTFFAVVFTFYLIPLTI). Residues 214-496 (SSPCIMEKKD…PLWIMPPDEY (283 aa)) lie on the Extracellular side of the membrane. Residues 228–485 (PALIGHRGAP…DNSHTLSRVP (258 aa)) form the GP-PDE domain. Residues Asn301, Asn336, Asn352, Asn374, and Asn448 are each glycosylated (N-linked (GlcNAc...) asparagine). Residues 497-517 (CLMWVTADLISFSLIIGIFVL) traverse the membrane as a helical segment. At 518-607 (QKWRLGGIRS…AKTVTEQSGH (90 aa)) the chain is on the cytoplasmic side. Residues 582–607 (ANSTATPVGPRNAGSRAKTVTEQSGH) are disordered.

Belongs to the glycerophosphoryl diester phosphodiesterase family. Interacts with PRDX1; forms a mixed-disulfide with PRDX1, leading to disrupt intramolecular disulfide bond between Cys-25 and Cys-571. In terms of processing, intramolecular disulfide bond between Cys-25 and Cys-571 is reduced by PRDX1. Detected in brain, lung, heart, kidney and testis.

It is found in the endomembrane system. The protein resides in the cytoplasm. It localises to the perinuclear region. The protein localises to the cell projection. Its subcellular location is the growth cone. It carries out the reaction a 1,2-diacyl-sn-glycero-3-phospho-(1D-myo-inositol-4,5-bisphosphate) + H2O = 1D-myo-inositol 1,4,5-trisphosphate + a 1,2-diacyl-sn-glycerol + H(+). The catalysed reaction is sn-glycerol 3-phosphocholine + H2O = sn-glycerol 3-phosphate + choline + H(+). With respect to regulation, inhibited by high level of NaCl or urea. Glycerophosphodiester phosphodiesterase that promotes neurite formation and drives spinal motor neuron differentiation. Mediates the cleavage of glycosylphosphatidylinositol (GPI) anchor of target proteins: removes the GPI-anchor of RECK, leading to release RECK from the plasma membrane. May contribute to the osmotic regulation of cellular glycerophosphocholine. The protein is Glycerophosphodiester phosphodiesterase domain-containing protein 5 of Mus musculus (Mouse).